We begin with the raw amino-acid sequence, 264 residues long: Putative hydroxypyruvate isomerase (264 aa).

Residues Glu145 and Glu243 each act as proton donor/acceptor in the active site.

This sequence belongs to the hyi family.

The enzyme catalyses 3-hydroxypyruvate = 2-hydroxy-3-oxopropanoate. Catalyzes the reversible isomerization between hydroxypyruvate and 2-hydroxy-3-oxopropanoate (also termed tartronate semialdehyde). This is Putative hydroxypyruvate isomerase (Gip) from Drosophila melanogaster (Fruit fly).